Here is a 444-residue protein sequence, read N- to C-terminus: ATP-dependent protease ATPase subunit HslU (444 aa).

ATP-binding positions include I18 and 60–65 (GVGKTE). The disordered stretch occupies residues 141-161 (DAWGNNEEGDNDSGTRQSFRK). 3 residues coordinate ATP: D257, E322, and R394.

This sequence belongs to the ClpX chaperone family. HslU subfamily. A double ring-shaped homohexamer of HslV is capped on each side by a ring-shaped HslU homohexamer. The assembly of the HslU/HslV complex is dependent on binding of ATP.

The protein localises to the cytoplasm. Functionally, ATPase subunit of a proteasome-like degradation complex; this subunit has chaperone activity. The binding of ATP and its subsequent hydrolysis by HslU are essential for unfolding of protein substrates subsequently hydrolyzed by HslV. HslU recognizes the N-terminal part of its protein substrates and unfolds these before they are guided to HslV for hydrolysis. The sequence is that of ATP-dependent protease ATPase subunit HslU from Aliivibrio fischeri (strain MJ11) (Vibrio fischeri).